The sequence spans 342 residues: MTIRIAINGFGRIGRNVVRALYESGRRAEITVVAINELADAAGIAHLLKYDTSHGRFAWDVRQEREQLFVGDDSIRLLHEPTIAALPWRELAVDVVLDCTGVYGSREHGEAHLQAGAKKVLFSHPGGNDLDATVVYGVNQDELRAGHRIVSNASCTTNCIIPIIKLLDDAYGIESGTVTTIHSAMHDQQVIDAYHPDLRRTRAASQSIIPVDTKLAAGITRIFPQFNDRFEAIAVRVPTINVTAIDLSVTVKKPVKACEVNQLLQKAAQGAFHGIVDYTELPLVSTDFNHDPHSAIVDGTQTRVSGAHLIKTLVWCDNEWGFANRMLDTTLAMAAIGFRFDA.

12–13 (RI) is an NAD(+) binding site. Substrate is bound by residues 154–156 (SCT), Arg-200, 213–214 (TK), and Arg-236. The active-site Nucleophile is Cys-155. Asn-318 lines the NAD(+) pocket.

The protein belongs to the glyceraldehyde-3-phosphate dehydrogenase family. Epd subfamily. Homotetramer.

Its subcellular location is the cytoplasm. It catalyses the reaction D-erythrose 4-phosphate + NAD(+) + H2O = 4-phospho-D-erythronate + NADH + 2 H(+). Its pathway is cofactor biosynthesis; pyridoxine 5'-phosphate biosynthesis; pyridoxine 5'-phosphate from D-erythrose 4-phosphate: step 1/5. Catalyzes the NAD-dependent conversion of D-erythrose 4-phosphate to 4-phosphoerythronate. This Klebsiella pneumoniae subsp. pneumoniae (strain ATCC 700721 / MGH 78578) protein is D-erythrose-4-phosphate dehydrogenase.